The chain runs to 219 residues: LHFPL tetraspan subfamily member 5 protein (219 aa).

The Cytoplasmic segment spans residues 1-24 (MVKLLPAQEAAKIYHTNYVRNSRA). The helical transmembrane segment at 25 to 45 (VGVMWGTLTICFSVLVMALFI) threads the bilayer. The Extracellular portion of the chain corresponds to 46–98 (QPYWIGDSVSTPQAGYFGLFSYCVGNVLSSELICKGGPLDFSSIPSRAFKTAM). The chain crosses the membrane as a helical span at residues 99–119 (FFVALAMFLIIGSIICFSLFF). At 120–128 (VCNTATVYK) the chain is on the cytoplasmic side. Residues 129-149 (ICAWMQLAAATGLMIGCLVYP) form a helical membrane-spanning segment. The Extracellular portion of the chain corresponds to 150–178 (DGWDSSEVRRMCGEQTGKYTLGHCTIRWA). Residues 179-199 (FMLAILSIGDALILSFLAFVL) traverse the membrane as a helical segment. At 200–219 (GYRQDKLLPDDYKADGNEEV) the chain is on the cytoplasmic side.

The protein belongs to the LHFP family. As to quaternary structure, forms the MET channel composed of TMC (TMC1 or TMC2), TMIE, TOMT, CIB (CIB2 or CIB3), LHPL5 and PCDH15. Interaction with PCDH15 is required for efficient localization to hair bundles.

The protein localises to the cell membrane. Its function is as follows. Auxiliary subunit of the mechanotransducer (MET) non-specific cation channel complex located at the tips of the shorter stereocilia of cochlear hair cells and that mediates sensory transduction in the auditory system. The MET complex is composed of two dimeric pore-forming ion-conducting transmembrane TMC (TMC1 or TMC2) subunits, and aided by several auxiliary proteins including LHFPL5, TMIE, CIB2/3 and TOMT, and the tip-link PCDH15. Functionally couples PCDH15 to the transduction channel. This chain is LHFPL tetraspan subfamily member 5 protein, found in Rattus norvegicus (Rat).